The following is a 154-amino-acid chain: Endoribonuclease YbeY (154 aa).

Positions 115, 119, and 125 each coordinate Zn(2+).

The protein belongs to the endoribonuclease YbeY family. The cofactor is Zn(2+).

The protein localises to the cytoplasm. Single strand-specific metallo-endoribonuclease involved in late-stage 70S ribosome quality control and in maturation of the 3' terminus of the 16S rRNA. The chain is Endoribonuclease YbeY from Halorhodospira halophila (strain DSM 244 / SL1) (Ectothiorhodospira halophila (strain DSM 244 / SL1)).